The chain runs to 118 residues: Large ribosomal subunit protein bL17 (118 aa).

Belongs to the bacterial ribosomal protein bL17 family. In terms of assembly, part of the 50S ribosomal subunit. Contacts protein L32.

The chain is Large ribosomal subunit protein bL17 from Aster yellows witches'-broom phytoplasma (strain AYWB).